Reading from the N-terminus, the 59-residue chain is Potassium channel toxin alpha-KTx 16.7 (59 aa).

Positions 1-22 (MKILSILLIALVICSISICTEA) are cleaved as a signal peptide. Intrachain disulfides connect cysteine 30-cysteine 51, cysteine 36-cysteine 56, and cysteine 40-cysteine 58.

This sequence belongs to the short scorpion toxin superfamily. Potassium channel inhibitor family. Alpha-KTx 16 subfamily. Expressed by the venom gland.

It localises to the secreted. In terms of biological role, may play a role in blocking voltage-gated potassium channels Kv1.2/KCNA2, and Kv1.3/KCNA3. Blocks the voltage-gated potassium channel Kv1.3/KCNA3, with an IC(50) of 118.3 +-55.8 nM. The sequence is that of Potassium channel toxin alpha-KTx 16.7 from Mesobuthus gibbosus (Mediterranean checkered scorpion).